The sequence spans 392 residues: Chalcone synthase-like protein 1 (392 aa).

C166 is a catalytic residue.

The protein belongs to the thiolase-like superfamily. Chalcone/stilbene synthases family. In terms of tissue distribution, expressed at the same level in leaves and in glandular trichomes.

The protein localises to the cytoplasm. Its function is as follows. Chalcone synthase that may use malonyl-CoA and hexanoyl-CoA as substrates but without producing olivetol or olivetolic acid. The chain is Chalcone synthase-like protein 1 (CAN383) from Cannabis sativa (Hemp).